We begin with the raw amino-acid sequence, 509 residues long: Probable glycine dehydrogenase (decarboxylating) subunit 2 (509 aa).

K278 bears the N6-(pyridoxal phosphate)lysine mark.

Belongs to the GcvP family. C-terminal subunit subfamily. In terms of assembly, the glycine cleavage system is composed of four proteins: P, T, L and H. In this organism, the P 'protein' is a heterodimer of two subunits. The cofactor is pyridoxal 5'-phosphate.

The catalysed reaction is N(6)-[(R)-lipoyl]-L-lysyl-[glycine-cleavage complex H protein] + glycine + H(+) = N(6)-[(R)-S(8)-aminomethyldihydrolipoyl]-L-lysyl-[glycine-cleavage complex H protein] + CO2. Functionally, the glycine cleavage system catalyzes the degradation of glycine. The P protein binds the alpha-amino group of glycine through its pyridoxal phosphate cofactor; CO(2) is released and the remaining methylamine moiety is then transferred to the lipoamide cofactor of the H protein. This chain is Probable glycine dehydrogenase (decarboxylating) subunit 2, found in Saccharolobus islandicus (strain Y.N.15.51 / Yellowstone #2) (Sulfolobus islandicus).